We begin with the raw amino-acid sequence, 1839 residues long: Non-structural replication polyprotein (1839 aa).

The Alphavirus-like MT domain maps to 58-219 (SGLGVTPHPH…NQPLQAPSWL (162 aa)). Disordered stretches follow at residues 253-277 (PKPSLSARPPVLPNQPPRATTPNSQ), 578-623 (AQAS…PLTR), and 645-703 (TSAE…PSGA). The segment covering 584–599 (APRPPAFHAIPLPPQP) has biased composition (pro residues). A compositionally biased stretch (low complexity) spans 600–614 (STSSSPPLQEPTLSP). Residues 652–670 (PLNPPTPSPTPDVPPPDSP) are compositionally biased toward pro residues. The Peptidase C21 domain occupies 723 to 877 (SHPFTPLADD…RLAASAPRCN (155 aa)). Residues cysteine 776 and histidine 862 each act as for protease activity in the active site. Residues 935 to 1092 (KGPSPREKLT…RFKSYIDCYC (158 aa)) form the (+)RNA virus helicase ATP-binding domain. Residue 965–972 (GFAGCGKT) coordinates ATP. The region spanning 1093–1224 (FWSHRIPKQI…GTIDLNNVFP (132 aa)) is the (+)RNA virus helicase C-terminal domain. The RdRp catalytic domain occupies 1567 to 1673 (SSYIANDYTA…CGTPPPSPLW (107 aa)).

This sequence belongs to the Tymoviridae non-structural replication polyprotein family. Specific enzymatic cleavages by the host yield mature proteins.

It catalyses the reaction RNA(n) + a ribonucleoside 5'-triphosphate = RNA(n+1) + diphosphate. In terms of biological role, acts as a cysteine protease, methyltransferase and deubiquitinase. The cysteine protease activity cleaves the polyprotein giving rise to mature proteins. The methyltransferase domain is probably involved in viral RNA capping. Functionally, RNA-directed RNA polymerase is responsible for the replication and transcription of the genome. This chain is Non-structural replication polyprotein, found in Solanum lycopersicum (Tomato).